The sequence spans 847 residues: UPF0182 protein CYB_0372 (847 aa).

The next 7 helical transmembrane spans lie at 7–27 (GLFL…LAAF), 51–71 (WGLG…NICS), 76–96 (ATLA…AGSL), 141–161 (FNLV…ELGL), 168–188 (LALS…LFLI), 220–240 (LPAT…FWAL), and 259–279 (WASS…FGLL).

The protein belongs to the UPF0182 family.

Its subcellular location is the cell membrane. The sequence is that of UPF0182 protein CYB_0372 from Synechococcus sp. (strain JA-2-3B'a(2-13)) (Cyanobacteria bacterium Yellowstone B-Prime).